The sequence spans 220 residues: Adenylate kinase (220 aa).

10–15 lines the ATP pocket; the sequence is GSGKST. The interval 30–59 is NMP; sequence SSGDLIRKEIAEGTPLGREMQAYLARGDLI. Residues serine 31, arginine 36, 57–59, 83–86, and glutamine 90 contribute to the AMP site; these read DLI and GYPR. The tract at residues 124–161 is LID; that stretch reads GRRICPKCGAVYHVEFNPPKIPGRCDVCGAELVQREDD. Arginine 125 contributes to the ATP binding site. Positions 128 and 131 each coordinate Zn(2+). Residue 134 to 135 participates in ATP binding; sequence VY. Residues cysteine 148 and cysteine 151 each coordinate Zn(2+). AMP contacts are provided by arginine 158 and arginine 169. Glycine 197 serves as a coordination point for ATP.

Belongs to the adenylate kinase family. As to quaternary structure, monomer.

It localises to the cytoplasm. It carries out the reaction AMP + ATP = 2 ADP. Its pathway is purine metabolism; AMP biosynthesis via salvage pathway; AMP from ADP: step 1/1. Catalyzes the reversible transfer of the terminal phosphate group between ATP and AMP. Plays an important role in cellular energy homeostasis and in adenine nucleotide metabolism. The protein is Adenylate kinase of Pyrococcus furiosus (strain ATCC 43587 / DSM 3638 / JCM 8422 / Vc1).